A 232-amino-acid chain; its full sequence is MIIIEKIKRGLIVSCQALENEPLHSSFIMSKMALAAKMGGAIGIRANGVNDISQIKLEVDLPIIGIIKRNYNNCDVFITPTMKEIDELCNEGVDIIALDATFRNRPDSVSLDDFFKSIKKKYPKQCLMADISSLDEAINADKLGFDFIGTTLYGYTKSTNGLDIADNDFNFLKTLINSNLKSTLIVEGKIDTPLKAQKCFEMGVDLVVVGGAITRPVEITKKFVEKINQVKR.

Belongs to the NanE family.

It catalyses the reaction an N-acyl-D-glucosamine 6-phosphate = an N-acyl-D-mannosamine 6-phosphate. Its pathway is amino-sugar metabolism; N-acetylneuraminate degradation; D-fructose 6-phosphate from N-acetylneuraminate: step 3/5. Functionally, converts N-acetylmannosamine-6-phosphate (ManNAc-6-P) to N-acetylglucosamine-6-phosphate (GlcNAc-6-P). This chain is Putative N-acetylmannosamine-6-phosphate 2-epimerase, found in Borreliella afzelii (strain PKo) (Borrelia afzelii).